Reading from the N-terminus, the 700-residue chain is Elongation factor G (700 aa).

Residues 10 to 286 (KKVRNIGIMA…AVIDYLPSPL (277 aa)) enclose the tr-type G domain. Residues 19–26 (AHIDAGKT), 83–87 (DTPGH), and 137–140 (NKMD) each bind GTP.

The protein belongs to the TRAFAC class translation factor GTPase superfamily. Classic translation factor GTPase family. EF-G/EF-2 subfamily.

It localises to the cytoplasm. Functionally, catalyzes the GTP-dependent ribosomal translocation step during translation elongation. During this step, the ribosome changes from the pre-translocational (PRE) to the post-translocational (POST) state as the newly formed A-site-bound peptidyl-tRNA and P-site-bound deacylated tRNA move to the P and E sites, respectively. Catalyzes the coordinated movement of the two tRNA molecules, the mRNA and conformational changes in the ribosome. The polypeptide is Elongation factor G (Nocardia farcinica (strain IFM 10152)).